The chain runs to 153 residues: MKLRIIWLGKTRDPWIKQGVTEYSGRIERYLPLAIDELKDEKDATLEEGRRREGERLLKQLSPNAVLVALDERGQQLDSVKFAEFIGKHRDSGTTELVFAIGGSYGFSDEVRSRAGKVLALSAMTFTHQMVRPFLLEQIYRACTILNNEPYHH.

S-adenosyl-L-methionine-binding positions include Leu70, Gly102, and 121–126 (LSAMTF).

Belongs to the RNA methyltransferase RlmH family. Homodimer.

It is found in the cytoplasm. It carries out the reaction pseudouridine(1915) in 23S rRNA + S-adenosyl-L-methionine = N(3)-methylpseudouridine(1915) in 23S rRNA + S-adenosyl-L-homocysteine + H(+). Functionally, specifically methylates the pseudouridine at position 1915 (m3Psi1915) in 23S rRNA. This Trichlorobacter lovleyi (strain ATCC BAA-1151 / DSM 17278 / SZ) (Geobacter lovleyi) protein is Ribosomal RNA large subunit methyltransferase H.